The primary structure comprises 585 residues: Bestrophin-1 (585 aa).

Over 1–31 (MTITYTSQVANARLGSFSRLLLCWRGSIYKL) the chain is Cytoplasmic. Position 10 (A10) interacts with Ca(2+). A helical transmembrane segment spans residues 32 to 51 (LYGEFFIFLLCYYIIRFIYR). The Extracellular portion of the chain corresponds to 52–60 (LALTEEQQL). A helical transmembrane segment spans residues 61 to 82 (MFEKLTLYCDSYIQLIPISFVL). Over 83–237 (GFYVTLVVTR…DWISIPLVYT (155 aa)) the chain is Cytoplasmic. A helical transmembrane segment spans residues 238–255 (QVVTVAVYSFFLTCLVGR). Topologically, residues 256-274 (QFLNPAKAYPGHELDLVVP) are extracellular. The chain crosses the membrane as a helical span at residues 275–288 (VFTFLQFFFYVGWL). Topologically, residues 289–585 (KVAEQLINPF…ALENRDEAHS (297 aa)) are cytoplasmic. 4 residues coordinate Ca(2+): Q293, N296, D301, and D304. The auto-inhibitory segment stretch occupies residues 346–379 (PYTAASAQFRRASFMGSTFNISLNKEEMEFQPNQ).

The protein belongs to the anion channel-forming bestrophin (TC 1.A.46) family. Calcium-sensitive chloride channel subfamily. Interacts with YWHAG; this interaction promotes the ligand-gated L-glutamate channel activity leading to the positive regulation of NMDA glutamate receptor activity through the L-glutamate secretion.

Its subcellular location is the cell membrane. It localises to the basolateral cell membrane. The enzyme catalyses chloride(in) = chloride(out). The catalysed reaction is hydrogencarbonate(in) = hydrogencarbonate(out). It catalyses the reaction 4-aminobutanoate(in) = 4-aminobutanoate(out). It carries out the reaction L-glutamate(out) = L-glutamate(in). Ligand-gated anion channel that allows the movement of anions across cell membranes when activated by calcium (Ca2+). Allows the movement of chloride and hydrogencarbonate. Found in a partially open conformation leading to significantly smaller chloride movement. Upon F2R/PAR-1 activation, the sequestered calcium is released into the cytosol of astrocytes, leading to the (Ca2+)-dependent release of L-glutamate into the synaptic cleft that targets the neuronal postsynaptic GRIN2A/NMDAR receptor resulting in the synaptic plasticity regulation. Upon activation of the norepinephrine-alpha-1 adrenergic receptor signaling pathway, transports as well D-serine than L-glutamate in a (Ca2+)-dependent manner, leading to activation of adjacent NMDAR receptors and therefore regulates the heterosynaptic long-term depression and metaplasticity during initial memory acquisition. Releases the 4-aminobutanoate neurotransmitter in a (Ca2+)-dependent manner, and participates in its tonic release from cerebellar glial cells. The sequence is that of Bestrophin-1 (BEST1) from Macaca fascicularis (Crab-eating macaque).